Here is a 123-residue protein sequence, read N- to C-terminus: Large ribosomal subunit protein bL12 (123 aa).

This sequence belongs to the bacterial ribosomal protein bL12 family. As to quaternary structure, homodimer. Part of the ribosomal stalk of the 50S ribosomal subunit. Forms a multimeric L10(L12)X complex, where L10 forms an elongated spine to which 2 to 4 L12 dimers bind in a sequential fashion. Binds GTP-bound translation factors.

Its function is as follows. Forms part of the ribosomal stalk which helps the ribosome interact with GTP-bound translation factors. Is thus essential for accurate translation. The sequence is that of Large ribosomal subunit protein bL12 from Rhodopseudomonas palustris (strain BisB5).